The following is a 729-amino-acid chain: Fatty acid oxidation complex subunit alpha (729 aa).

The segment at 1 to 189 (MLYKGDTLYL…KVGLVDAVVK (189 aa)) is enoyl-CoA hydratase/isomerase. Aspartate 296 lines the substrate pocket. Residues 311–729 (ETPKQAAVLG…AQPVGELQTA (419 aa)) form a 3-hydroxyacyl-CoA dehydrogenase region. NAD(+)-binding positions include methionine 324, aspartate 343, 400–402 (VVE), lysine 407, and serine 429. The For 3-hydroxyacyl-CoA dehydrogenase activity role is filled by histidine 450. Asparagine 453 serves as a coordination point for NAD(+). Residues asparagine 500 and tyrosine 660 each coordinate substrate. The tract at residues 708–729 (SHNAPYYPQVEPAQPVGELQTA) is disordered.

This sequence in the N-terminal section; belongs to the enoyl-CoA hydratase/isomerase family. In the C-terminal section; belongs to the 3-hydroxyacyl-CoA dehydrogenase family. In terms of assembly, heterotetramer of two alpha chains (FadB) and two beta chains (FadA).

The enzyme catalyses a (3S)-3-hydroxyacyl-CoA + NAD(+) = a 3-oxoacyl-CoA + NADH + H(+). It carries out the reaction a (3S)-3-hydroxyacyl-CoA = a (2E)-enoyl-CoA + H2O. The catalysed reaction is a 4-saturated-(3S)-3-hydroxyacyl-CoA = a (3E)-enoyl-CoA + H2O. It catalyses the reaction (3S)-3-hydroxybutanoyl-CoA = (3R)-3-hydroxybutanoyl-CoA. The enzyme catalyses a (3Z)-enoyl-CoA = a 4-saturated (2E)-enoyl-CoA. It carries out the reaction a (3E)-enoyl-CoA = a 4-saturated (2E)-enoyl-CoA. It functions in the pathway lipid metabolism; fatty acid beta-oxidation. Its function is as follows. Involved in the aerobic and anaerobic degradation of long-chain fatty acids via beta-oxidation cycle. Catalyzes the formation of 3-oxoacyl-CoA from enoyl-CoA via L-3-hydroxyacyl-CoA. It can also use D-3-hydroxyacyl-CoA and cis-3-enoyl-CoA as substrate. This Cronobacter sakazakii (strain ATCC BAA-894) (Enterobacter sakazakii) protein is Fatty acid oxidation complex subunit alpha.